Consider the following 59-residue polypeptide: Large ribosomal subunit protein bL32c (59 aa).

Residues 36–59 (KSRSFSGVSEHPKPKGFSRQQTNK) form a disordered region.

This sequence belongs to the bacterial ribosomal protein bL32 family.

It is found in the plastid. The protein resides in the chloroplast. This Oryza nivara (Indian wild rice) protein is Large ribosomal subunit protein bL32c.